A 213-amino-acid chain; its full sequence is Adenylate kinase (213 aa).

10-15 (GSGKGT) lines the ATP pocket. The interval 30–59 (STGDMLRTTVNKESVLGKNIQAIIKLGNLV) is NMP. AMP is bound by residues T31, R36, 57 to 59 (NLV), 85 to 88 (GFPR), and Q92. Positions 122–159 (GRMVHEPSGRIYHVTFNPPKQKGKDDITGENLIIRQDD) are LID. Residues R123 and 132 to 133 (IY) each bind ATP. The AMP site is built by R156 and R167. Residue C199 coordinates ATP.

Belongs to the adenylate kinase family. As to quaternary structure, monomer.

It is found in the cytoplasm. It catalyses the reaction AMP + ATP = 2 ADP. It functions in the pathway purine metabolism; AMP biosynthesis via salvage pathway; AMP from ADP: step 1/1. Its function is as follows. Catalyzes the reversible transfer of the terminal phosphate group between ATP and AMP. Plays an important role in cellular energy homeostasis and in adenine nucleotide metabolism. In Baumannia cicadellinicola subsp. Homalodisca coagulata, this protein is Adenylate kinase.